A 79-amino-acid chain; its full sequence is Protein FAM236C (79 aa).

Positions 19–48 (KGPQKDPEELVAVSDTAEDPSSGTGLPREP) are disordered.

Belongs to the FAM236 family.

The protein is Protein FAM236C of Homo sapiens (Human).